The sequence spans 281 residues: Very-long-chain (3R)-3-hydroxyacyl-CoA dehydratase 1 (281 aa).

The Cytoplasmic segment spans residues 1–68 (MGKGDWRQGR…RRLGLLATAW (68 aa)). A helical membrane pass occupies residues 69–88 (LTFYNIAMTAGWLVLAIAMV). At 89-107 (RFYMEKGTHRGLYKSIQKT) the chain is on the lumenal side. Residues 108-124 (LKFFQTFALLEVVHCLI) traverse the membrane as a helical segment. At 125-134 (GIVPTSVLVT) the chain is on the cytoplasmic side. The helical transmembrane segment at 135-152 (GVQVSSRIFMVWLITHSI) threads the bilayer. Residues 153 to 158 (KPIQNE) lie on the Lumenal side of the membrane. A helical transmembrane segment spans residues 159-173 (ESVVLFLVSWTVTEI). Over 174–196 (TRYSFYTFSLLDHLPHFIKWARY) the chain is Cytoplasmic. Residues 197 to 214 (NLFIILYPVGVAGELLTI) traverse the membrane as a helical segment. Residues tyrosine 203 and glutamate 210 contribute to the active site. The Lumenal segment spans residues 215 to 244 (YAALPYVKKSGMFSVRLPNKYNVSFDYYYF). Asparagine 236 carries N-linked (GlcNAc...) asparagine glycosylation. The chain crosses the membrane as a helical span at residues 245–262 (LLITMASYIPLFPQLYFH). Topologically, residues 263–281 (MLRQRRKVLHGEVIAEKDD) are cytoplasmic.

It belongs to the very long-chain fatty acids dehydratase HACD family. As to quaternary structure, may interact with enzymes of the ELO family (including ELOVL1); with those enzymes that mediate condensation, the first of the four steps of the reaction cycle responsible for fatty acids elongation, may be part of a larger fatty acids elongase complex. Interacts with TECR. N-glycosylated. As to expression, expressed at high levels in heart, skeletal muscle and testis, weak expression in kidney and liver.

It localises to the endoplasmic reticulum membrane. The enzyme catalyses a very-long-chain (3R)-3-hydroxyacyl-CoA = a very-long-chain (2E)-enoyl-CoA + H2O. The catalysed reaction is (3R)-hydroxyhexadecanoyl-CoA = (2E)-hexadecenoyl-CoA + H2O. It catalyses the reaction (3R)-hydroxyoctadecanoyl-CoA = (2E)-octadecenoyl-CoA + H2O. It carries out the reaction (3R)-hydroxyeicosanoyl-CoA = (2E)-eicosenoyl-CoA + H2O. The enzyme catalyses (3R)-hydroxydocosanoyl-CoA = (2E)-docosenoyl-CoA + H2O. The catalysed reaction is (3R)-hydroxytetracosanoyl-CoA = (2E)-tetracosenoyl-CoA + H2O. It catalyses the reaction (3R)-hydroxyhexacosanoyl-CoA = (2E)-hexacosenoyl-CoA + H2O. It participates in lipid metabolism; fatty acid biosynthesis. This is Very-long-chain (3R)-3-hydroxyacyl-CoA dehydratase 1 from Mus musculus (Mouse).